Reading from the N-terminus, the 462-residue chain is Fumarate hydratase class II (462 aa).

Substrate-binding positions include 97–99 (SGT), 128–131 (HPND), 138–140 (STN), and Thr-186. His-187 acts as the Proton donor/acceptor in catalysis. The active site involves Ser-317. Substrate contacts are provided by residues Ser-318 and 323–325 (KVN).

It belongs to the class-II fumarase/aspartase family. Fumarase subfamily. In terms of assembly, homotetramer.

It localises to the cytoplasm. The catalysed reaction is (S)-malate = fumarate + H2O. Its pathway is carbohydrate metabolism; tricarboxylic acid cycle; (S)-malate from fumarate: step 1/1. In terms of biological role, involved in the TCA cycle. Catalyzes the stereospecific interconversion of fumarate to L-malate. The protein is Fumarate hydratase class II of Neisseria meningitidis serogroup A / serotype 4A (strain DSM 15465 / Z2491).